The primary structure comprises 324 residues: Inhibitor of growth protein 1 homolog (324 aa).

Positions 120–237 (AEEEKKKKKS…SSRKQKSMAA (118 aa)) are disordered. Low complexity predominate over residues 140 to 169 (SSTTSSSSSSSSSSLSLSSSTNNTSSLNSS). Residues 170-186 (SGGGGGGSGGGGGGGGH) are compositionally biased toward gly residues. Low complexity predominate over residues 201 to 229 (SLTSSSSSGNINGMSSSSSSSSSSSSLSS). A PHD-type zinc finger spans residues 271–320 (PTYCFCNRVSFGEMVGCENPDCKIEWFHFECVGLTSTPKGKWYCPDCTRI). Zn(2+) is bound by residues Cys274, Cys276, Cys287, Cys292, His298, Cys301, Cys314, and Cys317.

Belongs to the ING family. Interacts with H3K4me3 and to a lesser extent with H3K4me2.

The protein resides in the nucleus. Its function is as follows. Involved in regulation of the growth and differentiation transition (GDT) process, probably by regulating gene expression via histone modification. In Dictyostelium discoideum (Social amoeba), this protein is Inhibitor of growth protein 1 homolog.